A 345-amino-acid polypeptide reads, in one-letter code: 4-hydroxythreonine-4-phosphate dehydrogenase (345 aa).

The substrate site is built by His148 and Thr149. A divalent metal cation-binding residues include His182, His227, and His282. The substrate site is built by Lys290, Asn299, and Arg308.

Belongs to the PdxA family. Homodimer. The cofactor is Zn(2+). Requires Mg(2+) as cofactor. Co(2+) is required as a cofactor.

It localises to the cytoplasm. It carries out the reaction 4-(phosphooxy)-L-threonine + NAD(+) = 3-amino-2-oxopropyl phosphate + CO2 + NADH. The protein operates within cofactor biosynthesis; pyridoxine 5'-phosphate biosynthesis; pyridoxine 5'-phosphate from D-erythrose 4-phosphate: step 4/5. Catalyzes the NAD(P)-dependent oxidation of 4-(phosphooxy)-L-threonine (HTP) into 2-amino-3-oxo-4-(phosphooxy)butyric acid which spontaneously decarboxylates to form 3-amino-2-oxopropyl phosphate (AHAP). The protein is 4-hydroxythreonine-4-phosphate dehydrogenase of Bradyrhizobium diazoefficiens (strain JCM 10833 / BCRC 13528 / IAM 13628 / NBRC 14792 / USDA 110).